Here is a 325-residue protein sequence, read N- to C-terminus: GMP reductase (325 aa).

Cys-174 acts as the Thioimidate intermediate in catalysis. 203–226 lines the NADP(+) pocket; sequence LIADGGIRTHGDIAKSIRFGASMV.

This sequence belongs to the IMPDH/GMPR family. GuaC type 2 subfamily.

The catalysed reaction is IMP + NH4(+) + NADP(+) = GMP + NADPH + 2 H(+). In terms of biological role, catalyzes the irreversible NADPH-dependent deamination of GMP to IMP. It functions in the conversion of nucleobase, nucleoside and nucleotide derivatives of G to A nucleotides, and in maintaining the intracellular balance of A and G nucleotides. This is GMP reductase from Staphylococcus aureus (strain NCTC 8325 / PS 47).